We begin with the raw amino-acid sequence, 509 residues long: FAD-linked oxidoreductase anuG (509 aa).

Residues 1 to 21 (MVQISNVWGFGLAIMASLAAA) form the signal peptide. The FAD-binding PCMH-type domain maps to 75–246 (YAAPKFTVVV…TSFEMSIYPT (172 aa)).

This sequence belongs to the oxygen-dependent FAD-linked oxidoreductase family. The cofactor is FAD.

It carries out the reaction (2S,9S)-annullatin H + 2 A = (2S,9S)-annullatin D + 2 AH2. Its pathway is secondary metabolite biosynthesis. In terms of biological role, cytochrome P450 monooxygenase; part of the gene cluster that mediates the biosynthesis of annullatin D, an alkylated aromatic polyketide with a fused dihydrobenzofuran lactone ring system that exhibits potent agonistic activities toward the cannabinoid receptors. Within the pathway, anuG is responsible for the five-member lactone ring formation in (2S, 9S)-annullatin D via oxidative lactonization between the two hydroxyl groups. The annullatin backbone 2-hydroxymethyl-3-pentylphenol is assembled from one acetyl-CoA starter unit and 5 malonyl-CoA elongation units by cooperation of the highly reducing polyketide synthase anuA, the short-chain dehydrogenase anuB and the oxidoreductase anuC, before being hydroxylated at the C-5 alkyl chain by the cytochrome P450 monooxygenase anuE to form (8S)-annullatin E. The prenyltransferase anuH subsequently installs one isoprenyl group at the benzene ring to form (8S)-annullatin J. Enzymatic or nonenzymatic dihydro-benzofuran ring formation between the prenyl and the phenolic hydroxyl groups in (8S)-annullatin J results in two diastereomers (2S,9S)-annullatin H and compound 12. The intermediate (2S,9S)-annullatin H is then converted to (2S,9S)-annullatin D by the FAD-linked oxidoreductase anuG-catalyzed five-member lactone ring formation. The isomer 12 acts as a substrate for the short-chain dehydrogenase anuF and is oxidized to (2R)-annullatin F, which is subsequently acetylated by an acetyltransferase leading to (2R)-annullatin G formation. The remaining enzymes identified within the cluster, anuD, anuI and anuJ, seem not to be involved in annullatin biosynthesis. This is FAD-linked oxidoreductase anuG from Penicillium roqueforti (strain FM164).